The sequence spans 255 residues: Acetylglutamate kinase (255 aa).

Substrate contacts are provided by residues 40–41, Arg-62, and Asn-153; that span reads GG.

It belongs to the acetylglutamate kinase family. ArgB subfamily.

It localises to the cytoplasm. The enzyme catalyses N-acetyl-L-glutamate + ATP = N-acetyl-L-glutamyl 5-phosphate + ADP. The protein operates within amino-acid biosynthesis; L-arginine biosynthesis; N(2)-acetyl-L-ornithine from L-glutamate: step 2/4. In terms of biological role, catalyzes the ATP-dependent phosphorylation of N-acetyl-L-glutamate. The chain is Acetylglutamate kinase from Bacillus thuringiensis subsp. konkukian (strain 97-27).